Here is a 369-residue protein sequence, read N- to C-terminus: UDP-N-acetylglucosamine--N-acetylmuramyl-(pentapeptide) pyrophosphoryl-undecaprenol N-acetylglucosamine transferase (369 aa).

Residues 10–12 (TGG), Asn124, Arg166, Ser196, and Gln300 each bind UDP-N-acetyl-alpha-D-glucosamine.

Belongs to the glycosyltransferase 28 family. MurG subfamily.

Its subcellular location is the cell membrane. It catalyses the reaction di-trans,octa-cis-undecaprenyl diphospho-N-acetyl-alpha-D-muramoyl-L-alanyl-D-glutamyl-meso-2,6-diaminopimeloyl-D-alanyl-D-alanine + UDP-N-acetyl-alpha-D-glucosamine = di-trans,octa-cis-undecaprenyl diphospho-[N-acetyl-alpha-D-glucosaminyl-(1-&gt;4)]-N-acetyl-alpha-D-muramoyl-L-alanyl-D-glutamyl-meso-2,6-diaminopimeloyl-D-alanyl-D-alanine + UDP + H(+). It participates in cell wall biogenesis; peptidoglycan biosynthesis. Cell wall formation. Catalyzes the transfer of a GlcNAc subunit on undecaprenyl-pyrophosphoryl-MurNAc-pentapeptide (lipid intermediate I) to form undecaprenyl-pyrophosphoryl-MurNAc-(pentapeptide)GlcNAc (lipid intermediate II). This Desulfitobacterium hafniense (strain DSM 10664 / DCB-2) protein is UDP-N-acetylglucosamine--N-acetylmuramyl-(pentapeptide) pyrophosphoryl-undecaprenol N-acetylglucosamine transferase.